We begin with the raw amino-acid sequence, 354 residues long: Opsin-1, short-wave-sensitive 2 (354 aa).

Residues 1 to 43 (MKQQQQTPELFEDFHMPITLDVSNISAYSPFLVPQDHLGHSGV) lie on the Extracellular side of the membrane. Residue Asn-24 is glycosylated (N-linked (GlcNAc...) asparagine). The chain crosses the membrane as a helical span at residues 44-68 (FMGMSAFMLFLFIAGTAINVLTIVC). Topologically, residues 69-80 (TIQYKKLRSHLN) are cytoplasmic. Residues 81-106 (YILVNLAISNLWVSVFGSSVAFYAFY) form a helical membrane-spanning segment. Residues 107–120 (KKYFVFGPIGCKIE) are Extracellular-facing. A disulfide bond links Cys-117 and Cys-194. Residues 121–140 (GFTSTIGGMVSLWSLAVVAL) form a helical membrane-spanning segment. Residues 141–159 (ERWLVICKPLGNFTFKTPH) lie on the Cytoplasmic side of the membrane. A helical membrane pass occupies residues 160-183 (AIAGCILPWCMALAAGLPPLLGWS). At 184–209 (RYIPEGLQCSCGPDWYTTNNKFNNES) the chain is on the extracellular side. The N-linked (GlcNAc...) asparagine glycan is linked to Asn-207. The chain crosses the membrane as a helical span at residues 210–237 (YVMFLFCFCFAVPFSTIVFCYGQLLITL). Residues 238–259 (KLAAKAQADSASTQKAEREVTK) are Cytoplasmic-facing. The helical transmembrane segment at 260–283 (MVVVMVFGFLICWGPYAIFAIWVV) threads the bilayer. At 284 to 291 (SNRGAPFD) the chain is on the extracellular side. Residues 292–316 (LRLATIPSCLCKASTVYNPVIYVLM) form a helical membrane-spanning segment. At Lys-303 the chain carries N6-(retinylidene)lysine. The Cytoplasmic segment spans residues 317–354 (NKQFRSCMMKMVFNKNIEEDEASSSSQVTQVSSVAPEK).

The protein belongs to the G-protein coupled receptor 1 family. Opsin subfamily. In terms of processing, phosphorylated on some or all of the serine and threonine residues present in the C-terminal region. As to expression, retinal long single cone outer segments.

It localises to the membrane. Functionally, visual pigments are the light-absorbing molecules that mediate vision. They consist of an apoprotein, opsin, covalently linked to cis-retinal. This Danio rerio (Zebrafish) protein is Opsin-1, short-wave-sensitive 2 (opn1sw2).